The sequence spans 742 residues: Ectonucleotide pyrophosphatase/phosphodiesterase 1 (742 aa).

Topologically, residues 1–113 (MELQNDLESL…TGFHSKVPFK (113 aa)) are cytoplasmic. The chain crosses the membrane as a helical span at residues 114–134 (IIFRTLFGSLVFAIFLILMIN). The Extracellular segment spans residues 135–742 (IAKPHHSTRV…SIDDLVDSDT (608 aa)). N-linked (GlcNAc...) asparagine glycans are attached at residues N161 and N204. The tract at residues 168–545 (PLTIVISLDG…VFTIGSHGYD (378 aa)) is phosphodiesterase. T219 serves as the catalytic Nucleophile. 3 N-linked (GlcNAc...) asparagine glycosylation sites follow: N264, N296, and N403. Over residues 640–659 (EETEQDNVDNDNDDNDDGNT) the composition is skewed to acidic residues. Disordered stretches follow at residues 640–670 (EETEQDNVDNDNDDNDDGNTDEIAAMPSSSL) and 686–711 (TLLGETSPSSRSSSSSSIQASATAST). The span at 691 to 711 (TSPSSRSSSSSSIQASATAST) shows a compositional bias: low complexity.

The protein belongs to the nucleotide pyrophosphatase/phosphodiesterase family. Post-translationally, autophosphorylated as part of the catalytic cycle of phosphodiesterase/pyrophosphatase activity. In terms of processing, N-glycosylated.

The protein resides in the membrane. It carries out the reaction Hydrolytically removes 5'-nucleotides successively from the 3'-hydroxy termini of 3'-hydroxy-terminated oligonucleotides.. The catalysed reaction is a ribonucleoside 5'-triphosphate + H2O = a ribonucleoside 5'-phosphate + diphosphate + H(+). The enzyme catalyses a 2'-deoxyribonucleoside 5'-triphosphate + H2O = a 2'-deoxyribonucleoside 5'-phosphate + diphosphate + H(+). Mediates extracellular nucleotide derived phosphate hydrolysis along with NPP2 and PHO5. This is Ectonucleotide pyrophosphatase/phosphodiesterase 1 (NPP1) from Saccharomyces cerevisiae (strain ATCC 204508 / S288c) (Baker's yeast).